Reading from the N-terminus, the 335-residue chain is Zinc-type alcohol dehydrogenase-like protein SAV2186 (335 aa).

It belongs to the zinc-containing alcohol dehydrogenase family. Quinone oxidoreductase subfamily.

In Staphylococcus aureus (strain Mu50 / ATCC 700699), this protein is Zinc-type alcohol dehydrogenase-like protein SAV2186.